Reading from the N-terminus, the 303-residue chain is Methionyl-tRNA formyltransferase (303 aa).

Residue 111–114 (SLLP) participates in (6S)-5,6,7,8-tetrahydrofolate binding.

The protein belongs to the Fmt family.

It catalyses the reaction L-methionyl-tRNA(fMet) + (6R)-10-formyltetrahydrofolate = N-formyl-L-methionyl-tRNA(fMet) + (6S)-5,6,7,8-tetrahydrofolate + H(+). Its function is as follows. Attaches a formyl group to the free amino group of methionyl-tRNA(fMet). The formyl group appears to play a dual role in the initiator identity of N-formylmethionyl-tRNA by promoting its recognition by IF2 and preventing the misappropriation of this tRNA by the elongation apparatus. This Ehrlichia canis (strain Jake) protein is Methionyl-tRNA formyltransferase.